Consider the following 128-residue polypeptide: Small ribosomal subunit protein uS9 (128 aa).

This sequence belongs to the universal ribosomal protein uS9 family.

The polypeptide is Small ribosomal subunit protein uS9 (Flavobacterium psychrophilum (strain ATCC 49511 / DSM 21280 / CIP 103535 / JIP02/86)).